A 228-amino-acid chain; its full sequence is Outer membrane protein assembly factor BamE (228 aa).

Residues 1–29 form the signal peptide; that stretch reads MNPILKGVYSPARLGVVALTLFGILGVTG. C30 carries N-palmitoyl cysteine lipidation. A lipid anchor (S-diacylglycerol cysteine) is attached at C30. Residues 197 to 228 are disordered; the sequence is DFFGSSKKDPDPQSPQLGPGTLNDVPKPADSK.

Belongs to the BamE family. Part of the Bam complex.

The protein resides in the cell outer membrane. Functionally, part of the outer membrane protein assembly complex, which is involved in assembly and insertion of beta-barrel proteins into the outer membrane. The sequence is that of Outer membrane protein assembly factor BamE from Polynucleobacter necessarius subsp. necessarius (strain STIR1).